Reading from the N-terminus, the 248-residue chain is Phosphomannomutase (248 aa).

D12 serves as the catalytic Nucleophile. Positions 12 and 14 each coordinate Mg(2+). The active-site Proton donor/acceptor is D14. Positions 21, 123, 134, 141, 179, and 181 each coordinate alpha-D-mannose 1-phosphate. Mg(2+) contacts are provided by D207, F219, and T224.

The protein belongs to the eukaryotic PMM family. In terms of assembly, homodimer. Requires Mg(2+) as cofactor.

Its subcellular location is the cytoplasm. It catalyses the reaction alpha-D-mannose 1-phosphate = D-mannose 6-phosphate. It functions in the pathway nucleotide-sugar biosynthesis; GDP-alpha-D-mannose biosynthesis; alpha-D-mannose 1-phosphate from D-fructose 6-phosphate: step 2/2. In terms of biological role, catalyzes the interconversion of mannose-6-phosphate to mannose-1-phosphate, the precursor for the synthesis of GDP-mannose. GDP-mannose is an essential sugar nucleotide for the synthesis of D-mannose-containing cell wall polysaccharides (galactomannans and glucomannans), glycolipids, glycoproteins and the antioxidant L-ascorbate. In Spinacia oleracea (Spinach), this protein is Phosphomannomutase.